A 761-amino-acid polypeptide reads, in one-letter code: Centrosomal protein of 85 kDa (761 aa).

Disordered regions lie at residues Met-1 to Gln-33 and Pro-95 to Leu-117. A compositionally biased stretch (polar residues) spans Ala-14–Gln-33. Position 16 is a phosphoserine (Ser-16). A Phosphoserine modification is found at Ser-140. Disordered regions lie at residues Lys-226–Ser-279 and Lys-435–Gln-472. The segment at Gly-256 to Thr-432 is mediates interaction with NEK2 and is required for its function in the suppression of centrosome disjunction. Coiled coils occupy residues Glu-333 to Gln-656 and Asp-723 to Arg-749. A required for centrosome localization and for its function in the suppression of centrosome disjunction region spans residues Leu-433–Ile-475. Composition is skewed to basic and acidic residues over residues Lys-435 to Ile-454 and Gln-462 to Gln-472.

It belongs to the CEP85 family. Homodimer. Interacts with STIL (via N-terminus); this interaction is essential for robust PLK4 activation and efficient centriole assembly and for PLK4-dependent cell migration. Interacts with PLK4; required for CEP85 to be able to drive centriole duplication and cell migration.

The protein resides in the cytoplasm. The protein localises to the cytoskeleton. It localises to the microtubule organizing center. It is found in the centrosome. Its subcellular location is the spindle pole. The protein resides in the nucleus. The protein localises to the nucleolus. It localises to the centriole. It is found in the cell cortex. Functionally, acts as a regulator of centriole duplication through a direct interaction with STIL, a key factor involved in the early steps of centriole formation. The CEP85-STIL protein complex acts as a modulator of PLK4-driven cytoskeletal rearrangements and directional cell motility. Acts as a negative regulator of NEK2 to maintain the centrosome integrity in interphase. Suppresses centrosome disjunction by inhibiting NEK2 kinase activity. The protein is Centrosomal protein of 85 kDa (Cep85) of Mus musculus (Mouse).